The following is a 372-amino-acid chain: NAD(P)H-quinone oxidoreductase subunit 1 (372 aa).

8 helical membrane-spanning segments follow: residues 29–49 (WIPF…LVVV), 97–117 (WLFT…YLIV), 130–150 (VGIF…LMAG), 176–196 (LALS…IDIV), 204–224 (ILGW…IAAL), 254–274 (FALF…VFAI), 308–328 (SLGI…AVLM), and 347–367 (FLLP…LAFP).

The protein belongs to the complex I subunit 1 family. In terms of assembly, NDH-1 is composed of at least 11 different subunits.

It localises to the cellular thylakoid membrane. It catalyses the reaction a plastoquinone + NADH + (n+1) H(+)(in) = a plastoquinol + NAD(+) + n H(+)(out). It carries out the reaction a plastoquinone + NADPH + (n+1) H(+)(in) = a plastoquinol + NADP(+) + n H(+)(out). Functionally, NDH-1 shuttles electrons from an unknown electron donor, via FMN and iron-sulfur (Fe-S) centers, to quinones in the respiratory and/or the photosynthetic chain. The immediate electron acceptor for the enzyme in this species is believed to be plastoquinone. Couples the redox reaction to proton translocation, and thus conserves the redox energy in a proton gradient. The chain is NAD(P)H-quinone oxidoreductase subunit 1 from Crocosphaera subtropica (strain ATCC 51142 / BH68) (Cyanothece sp. (strain ATCC 51142)).